The primary structure comprises 271 residues: Phosphate import ATP-binding protein PstB 2 (271 aa).

The ABC transporter domain occupies 25–266; it reads MATEDLHVYY…PQEKQTEDYI (242 aa). 57 to 64 is a binding site for ATP; sequence GPSGCGKS.

The protein belongs to the ABC transporter superfamily. Phosphate importer (TC 3.A.1.7) family. The complex is composed of two ATP-binding proteins (PstB), two transmembrane proteins (PstC and PstA) and a solute-binding protein (PstS).

The protein localises to the cell membrane. The catalysed reaction is phosphate(out) + ATP + H2O = ADP + 2 phosphate(in) + H(+). In terms of biological role, part of the ABC transporter complex PstSACB involved in phosphate import. Responsible for energy coupling to the transport system. The sequence is that of Phosphate import ATP-binding protein PstB 2 from Listeria monocytogenes serovar 1/2a (strain ATCC BAA-679 / EGD-e).